Reading from the N-terminus, the 228-residue chain is Carbonic anhydrase (228 aa).

Zn(2+) is bound by residues Cys56, Asp58, His112, and Cys115.

It belongs to the beta-class carbonic anhydrase family. The cofactor is Zn(2+).

The catalysed reaction is hydrogencarbonate + H(+) = CO2 + H2O. In terms of biological role, catalyzes the reversible hydration of CO(2) to H(2)CO(3). The main role may be to provide inorganic carbon for the bicarbonate-dependent carboxylation reactions catalyzed by pyruvate carboxylase, acetyl-CoA carboxylase and carbamoyl-phosphate synthetase. Involved in osmoadaptation. The chain is Carbonic anhydrase from Emericella nidulans (strain FGSC A4 / ATCC 38163 / CBS 112.46 / NRRL 194 / M139) (Aspergillus nidulans).